The following is a 216-amino-acid chain: Phosphoserine phosphatase (216 aa).

Asp-10 functions as the Nucleophile in the catalytic mechanism. Mg(2+) is bound by residues Asp-10 and Asp-12. Residue Asp-12 is the Proton donor of the active site. Residues Glu-19, Arg-55, 98 to 99 (SG), and Lys-143 each bind substrate. Asp-166 is a binding site for Mg(2+). Asn-169 contacts substrate.

Belongs to the HAD-like hydrolase superfamily. SerB family. Mg(2+) is required as a cofactor.

It carries out the reaction O-phospho-L-serine + H2O = L-serine + phosphate. The catalysed reaction is O-phospho-D-serine + H2O = D-serine + phosphate. It participates in amino-acid biosynthesis; L-serine biosynthesis; L-serine from 3-phospho-D-glycerate: step 3/3. The polypeptide is Phosphoserine phosphatase (Lactococcus lactis subsp. lactis (strain IL1403) (Streptococcus lactis)).